Reading from the N-terminus, the 441-residue chain is Ribosomal protein uS12 methylthiotransferase RimO (441 aa).

The region spanning 7–117 (ASIAMISLGC…VVLEVHRAAP (111 aa)) is the MTTase N-terminal domain. Residues Cys16, Cys52, Cys81, Cys150, Cys154, and Cys157 each coordinate [4Fe-4S] cluster. In terms of domain architecture, Radical SAM core spans 136–373 (LTPRHYAYLK…MAHQQAISAA (238 aa)). The TRAM domain occupies 376–441 (QTRVGREIDV…DEYDLHGDAV (66 aa)).

It belongs to the methylthiotransferase family. RimO subfamily. It depends on [4Fe-4S] cluster as a cofactor.

It is found in the cytoplasm. The enzyme catalyses L-aspartate(89)-[ribosomal protein uS12]-hydrogen + (sulfur carrier)-SH + AH2 + 2 S-adenosyl-L-methionine = 3-methylsulfanyl-L-aspartate(89)-[ribosomal protein uS12]-hydrogen + (sulfur carrier)-H + 5'-deoxyadenosine + L-methionine + A + S-adenosyl-L-homocysteine + 2 H(+). Functionally, catalyzes the methylthiolation of an aspartic acid residue of ribosomal protein uS12. The polypeptide is Ribosomal protein uS12 methylthiotransferase RimO (Bordetella petrii (strain ATCC BAA-461 / DSM 12804 / CCUG 43448)).